A 214-amino-acid polypeptide reads, in one-letter code: Methyltransferase HEMK2 (214 aa).

Thr-29, Glu-51, Gly-53, Asp-77, Asp-103, Leu-104, and Asn-122 together coordinate S-adenosyl-L-methionine. Residue Asn-122 coordinates a protein.

It belongs to the eukaryotic/archaeal PrmC-related family. As to quaternary structure, heterodimer; heterodimerization with TRMT112 is required for S-adenosyl-L-methionine-binding. Post-translationally, ubiquitinated, leading to its degradation by the proteasome. As to expression, highly expressed in undifferentiated embryonic stem cells (at protein level). Also expressed in testis and brain, weakly expressed in differentiated embryonic stem cells and kidney. Not expressed in muscle, heart, placenta, pancreas, lung and stomach.

The protein localises to the nucleus. It carries out the reaction L-lysyl-[histone] + S-adenosyl-L-methionine = N(6)-methyl-L-lysyl-[histone] + S-adenosyl-L-homocysteine + H(+). It catalyses the reaction L-glutaminyl-[protein] + S-adenosyl-L-methionine = N(5)-methyl-L-glutaminyl-[protein] + S-adenosyl-L-homocysteine + H(+). The catalysed reaction is methylarsonous acid + S-adenosyl-L-methionine = dimethylarsinate + S-adenosyl-L-homocysteine + 2 H(+). Methyltransferase that can methylate proteins and, to a lower extent, arsenic. Catalytic subunit of a heterodimer with TRMT112, which monomethylates 'Lys-12' of histone H4 (H4K12me1), a modification present at the promoters of numerous genes encoding cell cycle regulators. Catalytic subunit of a heterodimer with TRMT112, which catalyzes N5-methylation of Glu residue of proteins with a Gly-Gln-Xaa-Xaa-Xaa-Arg motif. Methylates ETF1 on 'Gln-185'; ETF1 needs to be complexed to ERF3 in its GTP-bound form to be efficiently methylated. May also play a role in the modulation of arsenic-induced toxicity by mediating the conversion of monomethylarsonous acid (3+) into the less toxic dimethylarsonic acid. It however only plays a limited role in arsenic metabolism compared with AS3MT. The chain is Methyltransferase HEMK2 from Mus musculus (Mouse).